The chain runs to 356 residues: UDP-N-acetylglucosamine--N-acetylmuramyl-(pentapeptide) pyrophosphoryl-undecaprenol N-acetylglucosamine transferase (356 aa).

Residues 12-14, asparagine 124, arginine 163, serine 188, isoleucine 242, and glutamine 287 each bind UDP-N-acetyl-alpha-D-glucosamine; that span reads TGG.

This sequence belongs to the glycosyltransferase 28 family. MurG subfamily.

The protein resides in the cell inner membrane. It catalyses the reaction di-trans,octa-cis-undecaprenyl diphospho-N-acetyl-alpha-D-muramoyl-L-alanyl-D-glutamyl-meso-2,6-diaminopimeloyl-D-alanyl-D-alanine + UDP-N-acetyl-alpha-D-glucosamine = di-trans,octa-cis-undecaprenyl diphospho-[N-acetyl-alpha-D-glucosaminyl-(1-&gt;4)]-N-acetyl-alpha-D-muramoyl-L-alanyl-D-glutamyl-meso-2,6-diaminopimeloyl-D-alanyl-D-alanine + UDP + H(+). The protein operates within cell wall biogenesis; peptidoglycan biosynthesis. Functionally, cell wall formation. Catalyzes the transfer of a GlcNAc subunit on undecaprenyl-pyrophosphoryl-MurNAc-pentapeptide (lipid intermediate I) to form undecaprenyl-pyrophosphoryl-MurNAc-(pentapeptide)GlcNAc (lipid intermediate II). The chain is UDP-N-acetylglucosamine--N-acetylmuramyl-(pentapeptide) pyrophosphoryl-undecaprenol N-acetylglucosamine transferase from Pseudomonas savastanoi pv. phaseolicola (strain 1448A / Race 6) (Pseudomonas syringae pv. phaseolicola (strain 1448A / Race 6)).